Consider the following 442-residue polypeptide: D-serine dehydratase (442 aa).

An N6-(pyridoxal phosphate)lysine modification is found at K118.

This sequence belongs to the serine/threonine dehydratase family. DsdA subfamily. As to quaternary structure, monomer. Pyridoxal 5'-phosphate is required as a cofactor.

It catalyses the reaction D-serine = pyruvate + NH4(+). In Escherichia coli O139:H28 (strain E24377A / ETEC), this protein is D-serine dehydratase.